The following is a 984-amino-acid chain: Valine--tRNA ligase (984 aa).

The 'HIGH' region signature appears at 65–75; sequence PNVTGSLHMGH. The short motif at 579 to 583 is the 'KMSKS' region element; it reads KMSKS. Lys-582 is a binding site for ATP. A coiled-coil region spans residues 954–984; the sequence is VEVVDAEKAKLAELEGQLTAMTAQMEELKNL.

It belongs to the class-I aminoacyl-tRNA synthetase family. ValS type 1 subfamily. In terms of assembly, monomer.

It localises to the cytoplasm. It catalyses the reaction tRNA(Val) + L-valine + ATP = L-valyl-tRNA(Val) + AMP + diphosphate. Catalyzes the attachment of valine to tRNA(Val). As ValRS can inadvertently accommodate and process structurally similar amino acids such as threonine, to avoid such errors, it has a 'posttransfer' editing activity that hydrolyzes mischarged Thr-tRNA(Val) in a tRNA-dependent manner. This Psychrobacter arcticus (strain DSM 17307 / VKM B-2377 / 273-4) protein is Valine--tRNA ligase.